We begin with the raw amino-acid sequence, 365 residues long: Flagellar P-ring protein (365 aa).

A signal peptide spans 1-19 (MIKFLSALILLLVTTAAQA).

This sequence belongs to the FlgI family. In terms of assembly, the basal body constitutes a major portion of the flagellar organelle and consists of four rings (L,P,S, and M) mounted on a central rod.

The protein resides in the periplasm. Its subcellular location is the bacterial flagellum basal body. Assembles around the rod to form the L-ring and probably protects the motor/basal body from shearing forces during rotation. This Escherichia coli O9:H4 (strain HS) protein is Flagellar P-ring protein.